A 197-amino-acid chain; its full sequence is Double homeobox protein 5 (197 aa).

2 consecutive DNA-binding regions (homeobox) follow at residues Gly-46 to His-105 and Gly-121 to Ser-180. Residues Gln-101–Ala-127 form a disordered region.

This sequence belongs to the paired homeobox family. As to expression, expressed in hepatoma Hep3B cells.

The protein resides in the nucleus. In Homo sapiens (Human), this protein is Double homeobox protein 5 (DUX5).